The sequence spans 255 residues: Indole-3-glycerol phosphate synthase (255 aa).

It belongs to the TrpC family.

The catalysed reaction is 1-(2-carboxyphenylamino)-1-deoxy-D-ribulose 5-phosphate + H(+) = (1S,2R)-1-C-(indol-3-yl)glycerol 3-phosphate + CO2 + H2O. It participates in amino-acid biosynthesis; L-tryptophan biosynthesis; L-tryptophan from chorismate: step 4/5. This Streptococcus mutans serotype c (strain ATCC 700610 / UA159) protein is Indole-3-glycerol phosphate synthase.